Consider the following 632-residue polypeptide: Chaperone protein HtpG (632 aa).

Positions 1 to 339 are a; substrate-binding; that stretch reads MTQQTMSFQA…SSDLPLNVSR (339 aa). The b stretch occupies residues 340–559; the sequence is EILQESRDVK…DNDMSGYLQR (220 aa). The interval 560-632 is c; the sequence is MLKAAGQNAP…TNALLLSRAA (73 aa).

The protein belongs to the heat shock protein 90 family. Homodimer.

Its subcellular location is the cytoplasm. Molecular chaperone. Has ATPase activity. The chain is Chaperone protein HtpG from Burkholderia thailandensis (strain ATCC 700388 / DSM 13276 / CCUG 48851 / CIP 106301 / E264).